The chain runs to 597 residues: Aspartate--tRNA ligase (597 aa).

Residue E173 participates in L-aspartate binding. The tract at residues 197 to 200 (QLFK) is aspartate. Residue R219 coordinates L-aspartate. ATP-binding positions include 219 to 221 (RDE) and Q228. H449 lines the L-aspartate pocket. Residue E483 participates in ATP binding. Residue R490 coordinates L-aspartate. Residue 535 to 538 (GLDR) participates in ATP binding.

The protein belongs to the class-II aminoacyl-tRNA synthetase family. Type 1 subfamily. As to quaternary structure, homodimer.

It is found in the cytoplasm. The enzyme catalyses tRNA(Asp) + L-aspartate + ATP = L-aspartyl-tRNA(Asp) + AMP + diphosphate. Its function is as follows. Catalyzes the attachment of L-aspartate to tRNA(Asp) in a two-step reaction: L-aspartate is first activated by ATP to form Asp-AMP and then transferred to the acceptor end of tRNA(Asp). This Shewanella pealeana (strain ATCC 700345 / ANG-SQ1) protein is Aspartate--tRNA ligase.